A 696-amino-acid chain; its full sequence is MNLRPRCRKWLPLATQQLRLRNLNRIQGFNIESWPHEKSLELDDPDDVLLYYTLHTDKASEAFYTSEKLPQRHQQQKWAEICTDDEAWRKTNAQCVCVKVWKHYSAERRDGQPPEVEQRHKDVFGRSQLTPSRLPRPPELLFSWGVYFSGLIPLSPLTLSQCGRNCLVFQLNGEQFASPSMISEQALQSQLHLHYQKYAEEEKLEEPQDEGINSPAVSRSSSPVLRMSTMRYAQLKCQRQEIRRSNNLEKLLTLQRLQRLHQQKRRQMAEVCREIARLSVHCVTRNELRLKPRTTSLSGDYSAHQYHSMGRALSVLLAEQQQIAPLTLYNAQQLTRRIEALSSQQRLLKAERETFRQRNERTRQLLKEMREQREAQQWELHSQRHRLEKERLELRTLAPQHLEQRDQKRQIERQVERRMSTLVLELQEIYNIQNVGGRQFSICGIAFPHMEQYTSESRQAANAQLLDNVSPLAVSAALGYVAHLVQMLAIIMDRPLRNRILYEPSKARIVDDIKELTYTTREFPLYTRSILPSQQTKYAIYLLRQNVSQLCFDITGQCDLRNTFGNLLELFSTLRYIERTQRDEVDERDGTAVGAGCGEARLANGLTAPHLSQSHSSVDMNHVPLPTGVNAVKDALLQQLLPPGVSEALAIEGYASTQRICRSVGSYSDGEDEFRPRLEHNYSNSDSNITLQTERS.

A phosphoserine mark is found at S214 and S218. Coiled-coil stretches lie at residues 251-278 and 330-394; these read LLTL…IARL and NAQQ…RLEL. Phosphoserine is present on S666. The disordered stretch occupies residues 666–696; the sequence is SYSDGEDEFRPRLEHNYSNSDSNITLQTERS. Y667 bears the Phosphotyrosine mark. A phosphoserine mark is found at S668 and S685. The segment covering 681–696 has biased composition (polar residues); it reads NYSNSDSNITLQTERS.

Functionally, involved in biosynthetic vesicle transport to lysosomes. Acts as a cell growth regulator. Also has a crucial role in controlling organ rotation by regulating membrane-localized Notch receptor endocytosis and subsequent degradation. Regulation of organ rotation is not by induction of autophagy. The protein is UV radiation resistance-associated gene protein (Uvrag) of Drosophila melanogaster (Fruit fly).